The following is a 194-amino-acid chain: Metalloproteinase inhibitor 2 (194 aa).

A Zn(2+)-binding site is contributed by cysteine 1. Involved in metalloproteinase-binding regions lie at residues 1-4 and 69-70; these read CSCS and SA. 6 disulfides stabilise this stretch: cysteine 1/cysteine 72, cysteine 3/cysteine 101, cysteine 13/cysteine 126, cysteine 128/cysteine 175, cysteine 133/cysteine 138, and cysteine 146/cysteine 167. The NTR domain occupies 1–126; it reads CSCSPVHPQQ…SLNHRYQMGC (126 aa).

It belongs to the protease inhibitor I35 (TIMP) family. In terms of assembly, interacts (via the C-terminal) with MMP2 (via the C-terminal PEX domain); the interaction inhibits the MMP2 activity. Post-translationally, the activity of TIMP2 is dependent on the presence of disulfide bonds.

The protein resides in the secreted. In terms of biological role, complexes with metalloproteinases (such as collagenases) and irreversibly inactivates them by binding to their catalytic zinc cofactor. This Oryctolagus cuniculus (Rabbit) protein is Metalloproteinase inhibitor 2 (TIMP2).